Reading from the N-terminus, the 453-residue chain is Tetrahydroanabasine acetyltransferase (453 aa).

Active-site proton acceptor residues include His163 and Asp388.

It belongs to the plant acyltransferase family. Monomer.

It carries out the reaction tetrahydroanabasine + acetyl-CoA = ammodendrine + CoA. It functions in the pathway alkaloid biosynthesis. In terms of biological role, tetrahydroanabasine acetyltransferase involved in the accumulation of quinolizidine type antinutritional alkaloids (QAs). QAs impart a bitter taste to plants, acting as repellents and toxicants for herbivores and predators, and possess a variety of pharmacological effects, including sedative, anticonvulsant, anti-inflammatory, antiviral, antitumor, antipyretic, anti-hepatitis B, antifibrotic, antiallergic, antidiarrheal, analgesic and antimicrobial activities. Mediates the conversion of tetrahydroanabasine into ammodendrine. The protein is Tetrahydroanabasine acetyltransferase of Lupinus angustifolius (Narrow-leaved blue lupine).